The primary structure comprises 148 residues: uncharacterized protein (148 aa).

Residues 97–112 (KKLDEQRMPGKPKNTE) are compositionally biased toward basic and acidic residues. Residues 97 to 126 (KKLDEQRMPGKPKNTEGSKSTIRKKANVGN) form a disordered region.

This is an uncharacterized protein from Caenorhabditis elegans.